A 246-amino-acid polypeptide reads, in one-letter code: Pyridoxine 5'-phosphate synthase (246 aa).

N12 lines the 3-amino-2-oxopropyl phosphate pocket. 14 to 15 is a 1-deoxy-D-xylulose 5-phosphate binding site; the sequence is DH. R23 is a 3-amino-2-oxopropyl phosphate binding site. H48 (proton acceptor) is an active-site residue. Residues R50 and H55 each coordinate 1-deoxy-D-xylulose 5-phosphate. Residue E75 is the Proton acceptor of the active site. 1-deoxy-D-xylulose 5-phosphate is bound at residue T105. The active-site Proton donor is the H196. Residues G197 and 218 to 219 each bind 3-amino-2-oxopropyl phosphate; that span reads GH.

The protein belongs to the PNP synthase family. Homooctamer; tetramer of dimers.

Its subcellular location is the cytoplasm. It carries out the reaction 3-amino-2-oxopropyl phosphate + 1-deoxy-D-xylulose 5-phosphate = pyridoxine 5'-phosphate + phosphate + 2 H2O + H(+). It functions in the pathway cofactor biosynthesis; pyridoxine 5'-phosphate biosynthesis; pyridoxine 5'-phosphate from D-erythrose 4-phosphate: step 5/5. Functionally, catalyzes the complicated ring closure reaction between the two acyclic compounds 1-deoxy-D-xylulose-5-phosphate (DXP) and 3-amino-2-oxopropyl phosphate (1-amino-acetone-3-phosphate or AAP) to form pyridoxine 5'-phosphate (PNP) and inorganic phosphate. This Pseudomonas savastanoi pv. phaseolicola (strain 1448A / Race 6) (Pseudomonas syringae pv. phaseolicola (strain 1448A / Race 6)) protein is Pyridoxine 5'-phosphate synthase.